The following is a 404-amino-acid chain: Cysteine desulfurase IscS (404 aa).

Residues 75–76 (AT), N155, Q183, and 203–205 (SGH) each bind pyridoxal 5'-phosphate. N6-(pyridoxal phosphate)lysine is present on K206. T243 is a binding site for pyridoxal 5'-phosphate. Catalysis depends on C328, which acts as the Cysteine persulfide intermediate. C328 contacts [2Fe-2S] cluster.

This sequence belongs to the class-V pyridoxal-phosphate-dependent aminotransferase family. NifS/IscS subfamily. As to quaternary structure, homodimer. Forms a heterotetramer with IscU, interacts with other sulfur acceptors. It depends on pyridoxal 5'-phosphate as a cofactor.

Its subcellular location is the cytoplasm. It carries out the reaction (sulfur carrier)-H + L-cysteine = (sulfur carrier)-SH + L-alanine. It participates in cofactor biosynthesis; iron-sulfur cluster biosynthesis. Its function is as follows. Master enzyme that delivers sulfur to a number of partners involved in Fe-S cluster assembly, tRNA modification or cofactor biosynthesis. Catalyzes the removal of elemental sulfur atoms from cysteine to produce alanine. Functions as a sulfur delivery protein for Fe-S cluster synthesis onto IscU, an Fe-S scaffold assembly protein, as well as other S acceptor proteins. The sequence is that of Cysteine desulfurase IscS from Shewanella baltica (strain OS223).